The following is a 225-amino-acid chain: PKHD-type hydroxylase HEAR3399 (225 aa).

Positions 77–177 constitute a Fe2OG dioxygenase domain; that stretch reads RYMPPLFNRY…RVCSFFWLQS (101 aa). Positions 95, 97, and 158 each coordinate Fe cation. Arginine 168 serves as a coordination point for 2-oxoglutarate.

Fe(2+) is required as a cofactor. The cofactor is L-ascorbate.

The polypeptide is PKHD-type hydroxylase HEAR3399 (Herminiimonas arsenicoxydans).